Reading from the N-terminus, the 462-residue chain is Exodeoxyribonuclease 7 large subunit (462 aa).

This sequence belongs to the XseA family. In terms of assembly, heterooligomer composed of large and small subunits.

It localises to the cytoplasm. The enzyme catalyses Exonucleolytic cleavage in either 5'- to 3'- or 3'- to 5'-direction to yield nucleoside 5'-phosphates.. Functionally, bidirectionally degrades single-stranded DNA into large acid-insoluble oligonucleotides, which are then degraded further into small acid-soluble oligonucleotides. This chain is Exodeoxyribonuclease 7 large subunit, found in Pectobacterium atrosepticum (strain SCRI 1043 / ATCC BAA-672) (Erwinia carotovora subsp. atroseptica).